The following is a 146-amino-acid chain: Hemoglobin subunit beta-2 (146 aa).

The 145-residue stretch at 2 to 146 (FLSAEEKGLV…VASALAHRYH (145 aa)) folds into the Globin domain. N6-succinyllysine is present on Lys-17. Residues Ser-44 and Ser-50 each carry the phosphoserine modification. Lys-59 carries the post-translational modification N6-succinyllysine. Residues His-63 and His-92 each contribute to the heme b site. Arg-104 is subject to Asymmetric dimethylarginine.

The protein belongs to the globin family. In terms of assembly, heterotetramer of two alpha chains and two beta chains. Red blood cells.

Functionally, involved in oxygen transport from the lung to the various peripheral tissues. The sequence is that of Hemoglobin subunit beta-2 (HBB2) from Panthera pardus saxicolor (Northern Persian leopard).